A 351-amino-acid chain; its full sequence is Photosystem II D2 protein (351 aa).

Residues 39–59 (TAYLAIGGWLTGTTFVTSWYT) form a helical membrane-spanning segment. A chlorophyll a-binding site is contributed by histidine 116. The helical transmembrane segment at 123 to 139 (GFMLRQFELARLIGIRP) threads the bilayer. 2 residues coordinate pheophytin a: glutamine 128 and asparagine 141. A helical transmembrane segment spans residues 151–164 (VFVSVFLLYPLGQS). Histidine 196 is a binding site for chlorophyll a. A helical transmembrane segment spans residues 206-226 (GALLSAIHGVTVENTLYEDGE). A plastoquinone-binding residues include histidine 213 and phenylalanine 260. Histidine 213 contributes to the Fe cation binding site. Histidine 267 contributes to the Fe cation binding site. A helical membrane pass occupies residues 277–293 (GLWTSSIGIIGLALNLR).

This sequence belongs to the reaction center PufL/M/PsbA/D family. As to quaternary structure, PSII is composed of 1 copy each of membrane proteins PsbA, PsbB, PsbC, PsbD, PsbE, PsbF, PsbH, PsbI, PsbJ, PsbK, PsbL, PsbM, PsbT, PsbX, PsbY, PsbZ, Psb30/Ycf12, peripheral proteins PsbO, CyanoQ (PsbQ), PsbU, PsbV and a large number of cofactors. It forms dimeric complexes. Requires The D1/D2 heterodimer binds P680, chlorophylls that are the primary electron donor of PSII, and subsequent electron acceptors. It shares a non-heme iron and each subunit binds pheophytin, quinone, additional chlorophylls, carotenoids and lipids. There is also a Cl(-1) ion associated with D1 and D2, which is required for oxygen evolution. The PSII complex binds additional chlorophylls, carotenoids and specific lipids. as cofactor.

It is found in the host cellular thylakoid membrane. It carries out the reaction 2 a plastoquinone + 4 hnu + 2 H2O = 2 a plastoquinol + O2. Photosystem II (PSII) is a light-driven water:plastoquinone oxidoreductase that uses light energy to abstract electrons from H(2)O, generating O(2) and a proton gradient subsequently used for ATP formation. It consists of a core antenna complex that captures photons, and an electron transfer chain that converts photonic excitation into a charge separation. The D1/D2 (PsbA/PsbD) reaction center heterodimer binds P680, the primary electron donor of PSII as well as several subsequent electron acceptors. D2 is needed for assembly of a stable PSII complex. This Synechococcus protein is Photosystem II D2 protein (psbD).